The following is a 132-amino-acid chain: Small ribosomal subunit protein uS8 (132 aa).

Belongs to the universal ribosomal protein uS8 family. In terms of assembly, part of the 30S ribosomal subunit. Contacts proteins S5 and S12.

In terms of biological role, one of the primary rRNA binding proteins, it binds directly to 16S rRNA central domain where it helps coordinate assembly of the platform of the 30S subunit. The sequence is that of Small ribosomal subunit protein uS8 from Brucella melitensis biotype 1 (strain ATCC 23456 / CCUG 17765 / NCTC 10094 / 16M).